Reading from the N-terminus, the 450-residue chain is Exodeoxyribonuclease 7 large subunit (450 aa).

It belongs to the XseA family. Heterooligomer composed of large and small subunits.

The protein localises to the cytoplasm. It catalyses the reaction Exonucleolytic cleavage in either 5'- to 3'- or 3'- to 5'-direction to yield nucleoside 5'-phosphates.. Functionally, bidirectionally degrades single-stranded DNA into large acid-insoluble oligonucleotides, which are then degraded further into small acid-soluble oligonucleotides. This is Exodeoxyribonuclease 7 large subunit from Listeria monocytogenes serovar 1/2a (strain ATCC BAA-679 / EGD-e).